Consider the following 370-residue polypeptide: Phospho-N-acetylmuramoyl-pentapeptide-transferase (370 aa).

11 helical membrane-spanning segments follow: residues 15–35 (PLEG…AAFA), 44–64 (LLSL…WWGV), 93–113 (MGGL…SWSG), 115–135 (AAEQ…VGGI), 155–175 (LLLQ…RGWI), 183–203 (FDIN…VFLA), 213–233 (GLDG…ALQL), 240–260 (GDPS…GFLV), 268–288 (VFMG…VALL), 296–316 (LIMG…VWVF), and 347–367 (QLVV…GIFF).

The protein belongs to the glycosyltransferase 4 family. MraY subfamily. Mg(2+) is required as a cofactor.

It localises to the cell inner membrane. The enzyme catalyses UDP-N-acetyl-alpha-D-muramoyl-L-alanyl-gamma-D-glutamyl-meso-2,6-diaminopimeloyl-D-alanyl-D-alanine + di-trans,octa-cis-undecaprenyl phosphate = di-trans,octa-cis-undecaprenyl diphospho-N-acetyl-alpha-D-muramoyl-L-alanyl-D-glutamyl-meso-2,6-diaminopimeloyl-D-alanyl-D-alanine + UMP. It functions in the pathway cell wall biogenesis; peptidoglycan biosynthesis. Functionally, catalyzes the initial step of the lipid cycle reactions in the biosynthesis of the cell wall peptidoglycan: transfers peptidoglycan precursor phospho-MurNAc-pentapeptide from UDP-MurNAc-pentapeptide onto the lipid carrier undecaprenyl phosphate, yielding undecaprenyl-pyrophosphoryl-MurNAc-pentapeptide, known as lipid I. The chain is Phospho-N-acetylmuramoyl-pentapeptide-transferase from Synechococcus sp. (strain CC9311).